Consider the following 750-residue polypeptide: Photosystem I P700 chlorophyll a apoprotein A1 (750 aa).

Transmembrane regions (helical) follow at residues 70-93, 156-179, 195-219, 291-309, 346-369, 385-411, 433-455, and 531-549; these read VFSA…FHGA, LYCT…FHYH, LNHH…HVSL, IAHH…GHMY, WHAQ…HHMY, LSLF…IFMV, AIIS…LYIH, and FLVH…LILL. Cys573 and Cys582 together coordinate [4Fe-4S] cluster. The next 2 membrane-spanning stretches (helical) occupy residues 589-610 and 664-686; these read HVFL…HFSW and LSAY…MFLF. A chlorophyll a'-binding site is contributed by His675. The chlorophyll a site is built by Met683 and Tyr691. Residue Trp692 coordinates phylloquinone. A helical transmembrane segment spans residues 724–744; that stretch reads AVGVTHYLLGGIATTWAFFLA.

Belongs to the PsaA/PsaB family. The PsaA/B heterodimer binds the P700 chlorophyll special pair and subsequent electron acceptors. PSI consists of a core antenna complex that captures photons, and an electron transfer chain that converts photonic excitation into a charge separation. The eukaryotic PSI reaction center is composed of at least 11 subunits. It depends on P700 is a chlorophyll a/chlorophyll a' dimer, A0 is one or more chlorophyll a, A1 is one or both phylloquinones and FX is a shared 4Fe-4S iron-sulfur center. as a cofactor.

The protein localises to the plastid. It is found in the chloroplast thylakoid membrane. The enzyme catalyses reduced [plastocyanin] + hnu + oxidized [2Fe-2S]-[ferredoxin] = oxidized [plastocyanin] + reduced [2Fe-2S]-[ferredoxin]. Functionally, psaA and PsaB bind P700, the primary electron donor of photosystem I (PSI), as well as the electron acceptors A0, A1 and FX. PSI is a plastocyanin-ferredoxin oxidoreductase, converting photonic excitation into a charge separation, which transfers an electron from the donor P700 chlorophyll pair to the spectroscopically characterized acceptors A0, A1, FX, FA and FB in turn. Oxidized P700 is reduced on the lumenal side of the thylakoid membrane by plastocyanin. In Nymphaea alba (White water-lily), this protein is Photosystem I P700 chlorophyll a apoprotein A1.